Reading from the N-terminus, the 332-residue chain is rRNA biogenesis protein rrp-36 (332 aa).

Disordered regions lie at residues 1 to 91, 104 to 196, 243 to 262, and 312 to 332; these read MPAV…ASQL, GALK…SGKS, SMES…ELLS, and KKIA…AEDR. 3 stretches are compositionally biased toward acidic residues: residues 27 to 45, 53 to 77, and 117 to 127; these read EPDS…EEEG, DTEE…DSDA, and EDGSDDDEEKE. 2 stretches are compositionally biased toward basic and acidic residues: residues 128-142 and 165-183; these read EPNW…MKAK and RRRD…RDPR. Residues 212-274 are a coiled coil; the sequence is DYQEDEMKQL…KKKEKELIKQ (63 aa). Positions 315 to 332 are enriched in basic and acidic residues; the sequence is AGKEKKALPLARRTAEDR.

The protein belongs to the RRP36 family. As to quaternary structure, associates with 90S and pre-40S pre-ribosomal particles.

The protein resides in the nucleus. The protein localises to the nucleolus. Functionally, component of the 90S pre-ribosome involved in the maturation of rRNAs. Required for early cleavages of the pre-RNAs in the 40S ribosomal subunit maturation pathway. In Neurospora crassa (strain ATCC 24698 / 74-OR23-1A / CBS 708.71 / DSM 1257 / FGSC 987), this protein is rRNA biogenesis protein rrp-36 (rrp-36).